Reading from the N-terminus, the 122-residue chain is Chorismate mutase AroH (122 aa).

One can recognise a Chorismate mutase aroH-type domain in the interval 2–120; that stretch reads VRGIRGAITV…AVRLRPDLES (119 aa). Prephenate-binding residues include Arg-6, Arg-89, and Tyr-107.

In terms of assembly, homotrimer.

It is found in the cytoplasm. It catalyses the reaction chorismate = prephenate. The protein operates within metabolic intermediate biosynthesis; prephenate biosynthesis; prephenate from chorismate: step 1/1. Its activity is regulated as follows. Inhibited by 40% with 500 uM tyrosine, and a tyrosine concentration as high as 5 mM reduced activity to 5%. In terms of biological role, catalyzes the Claisen rearrangement of chorismate to prephenate. Probably involved in the aromatic amino acid biosynthesis. The polypeptide is Chorismate mutase AroH (Thermus thermophilus).